Consider the following 232-residue polypeptide: tRNA (guanine-N(7)-)-methyltransferase (232 aa).

S-adenosyl-L-methionine contacts are provided by E63, E88, D115, and D137. The active site involves D137. Residues K141, D173, and 211 to 214 (TRYE) each bind substrate.

Belongs to the class I-like SAM-binding methyltransferase superfamily. TrmB family.

It carries out the reaction guanosine(46) in tRNA + S-adenosyl-L-methionine = N(7)-methylguanosine(46) in tRNA + S-adenosyl-L-homocysteine. It functions in the pathway tRNA modification; N(7)-methylguanine-tRNA biosynthesis. Its function is as follows. Catalyzes the formation of N(7)-methylguanine at position 46 (m7G46) in tRNA. The polypeptide is tRNA (guanine-N(7)-)-methyltransferase (Rhizobium meliloti (strain 1021) (Ensifer meliloti)).